The sequence spans 140 residues: MSIMQVEVVSGEQKIYSGEATFIVVPTVQGELGIYPRHEPIMSLVRPGALRLTVPGEDKEVLVAVSGGILEVQPDKVTVLADVAVRSAEMDRARAEEAKKAAEAGISQAKDDKALAEAHKALAAAIAQLKTLDYIRSHKK.

The protein belongs to the ATPase epsilon chain family. In terms of assembly, F-type ATPases have 2 components, CF(1) - the catalytic core - and CF(0) - the membrane proton channel. CF(1) has five subunits: alpha(3), beta(3), gamma(1), delta(1), epsilon(1). CF(0) has three main subunits: a, b and c.

It is found in the cell inner membrane. Its function is as follows. Produces ATP from ADP in the presence of a proton gradient across the membrane. This Neisseria gonorrhoeae (strain ATCC 700825 / FA 1090) protein is ATP synthase epsilon chain.